Here is a 557-residue protein sequence, read N- to C-terminus: MPPRLRPLLLRVSLWVLVGSSSPALLHDRSKENGLQLPRLCKFCDVKATTCSNQDQCKSNCNITSICEKNNEVCAAVWRRNDENVTLETICHDPQKRLYGHMLDDSSSEQCVMKEKKDDGGLMFMCSCTGEECNDVLIFSAIDPHKPEEKDEISKVTIISLVPLLVISVAVIVIFYAYRTHKKRKLNKAWEKNVKPKKHKDCSDVCAIMLDDDHSDISSTCANNINHNTELLPIELDIVVGKGRFAEVYKAKLKQNTSEQYETVAVKIFPYEEYASWKTEKDIFSDVNLKHENILQFLTAEERKTDLGKQYWLITAFHARGNLQEYLTRHIISWEDLWKLGGSLARGIAHLHSDHTPCGRPKTPIVHRDLKSSNILVKNDLTCCLCDFGLSLRLDPSLSVDDLANSGQVGTARYMAPEVLESRMNLENMESFKQTDVYSMALVLWEMTSRCNGVGEVKEYEPPFGSKVREHPCVESMKDNVLRDRGRPEIPSSWLNHQGIQMVCETLIECWDHDPEARLTAQCVAERFSEFKHHDKLSGRSCSEEKIPEDGSVTTAK.

An N-terminal signal peptide occupies residues 1-23; that stretch reads MPPRLRPLLLRVSLWVLVGSSSP. Residues 24 to 155 lie on the Extracellular side of the membrane; the sequence is ALLHDRSKEN…KPEEKDEISK (132 aa). Intrachain disulfides connect Cys-41–Cys-74, Cys-44–Cys-61, Cys-51–Cys-57, Cys-67–Cys-91, Cys-111–Cys-126, and Cys-128–Cys-133. N-linked (GlcNAc...) asparagine glycosylation is found at Asn-62 and Asn-84. Residues 156 to 176 traverse the membrane as a helical segment; that stretch reads VTIISLVPLLVISVAVIVIFY. Topologically, residues 177–557 are cytoplasmic; that stretch reads AYRTHKKRKL…PEDGSVTTAK (381 aa). Positions 234-537 constitute a Protein kinase domain; that stretch reads IELDIVVGKG…FSEFKHHDKL (304 aa). Residues 240–248 and Lys-267 each bind ATP; that span reads VGKGRFAEV. The Proton acceptor role is filled by Asp-369.

This sequence belongs to the protein kinase superfamily. TKL Ser/Thr protein kinase family. TGFB receptor subfamily. Heterohexamer; TGFB1, TGFB2 and TGFB3 homodimeric ligands assemble a functional receptor composed of two TGFBR1 and TGFBR2 heterodimers to form a ligand-receptor heterohexamer. Mg(2+) serves as cofactor. It depends on Mn(2+) as a cofactor. Phosphorylated on a Ser/Thr residue in the cytoplasmic domain. As to expression, detected at low levels in embryonic heart, brain and lung. Detected at high levels in hatchling heart and lung.

The protein localises to the cell membrane. It is found in the membrane raft. It catalyses the reaction L-threonyl-[receptor-protein] + ATP = O-phospho-L-threonyl-[receptor-protein] + ADP + H(+). It carries out the reaction L-seryl-[receptor-protein] + ATP = O-phospho-L-seryl-[receptor-protein] + ADP + H(+). Transmembrane serine/threonine kinase forming with the TGF-beta type I serine/threonine kinase receptor, TGFBR1, the non-promiscuous receptor for the TGF-beta cytokines TGFB1, TGFB2 and TGFB3. Transduces the TGFB1, TGFB2 and TGFB3 signal from the cell surface to the cytoplasm and is thus regulating a plethora of physiological and pathological processes including cell cycle arrest in epithelial and hematopoietic cells, control of mesenchymal cell proliferation and differentiation, wound healing, extracellular matrix production, immunosuppression and carcinogenesis. The formation of the receptor complex composed of 2 TGFBR1 and 2 TGFBR2 molecules symmetrically bound to the cytokine dimer results in the phosphorylation and the activation of TGFRB1 by the constitutively active TGFBR2. Activated TGFBR1 phosphorylates SMAD2 which dissociates from the receptor and interacts with SMAD4. The SMAD2-SMAD4 complex is subsequently translocated to the nucleus where it modulates the transcription of the TGF-beta-regulated genes. This constitutes the canonical SMAD-dependent TGF-beta signaling cascade. Also involved in non-canonical, SMAD-independent TGF-beta signaling pathways. The protein is TGF-beta receptor type-2 (TGFBR2) of Gallus gallus (Chicken).